We begin with the raw amino-acid sequence, 212 residues long: Ribosomal RNA small subunit methyltransferase G (212 aa).

S-adenosyl-L-methionine-binding positions include G80, L85, 131 to 132 (AE), and R146.

It belongs to the methyltransferase superfamily. RNA methyltransferase RsmG family.

It localises to the cytoplasm. The enzyme catalyses guanosine(527) in 16S rRNA + S-adenosyl-L-methionine = N(7)-methylguanosine(527) in 16S rRNA + S-adenosyl-L-homocysteine. Specifically methylates the N7 position of guanine in position 527 of 16S rRNA. In Xylella fastidiosa (strain 9a5c), this protein is Ribosomal RNA small subunit methyltransferase G.